The following is a 629-amino-acid chain: MMTGTTLILEPVMDSKDELVKQHAKVAEDAVAGWEKAENEVVELKQKLEDAADKNIVLEDRVSHLDGALKECVRQLRQFRDEQEKNIQAAVTESTKELHSANTGLEKRVLELQKEAEAAKSENMMLRREFLTQREDLEIVMIERDLSTQAAETASKQHLDIIKKLAKLEAECRKLRILAKTSSSLSSNQSVDSHSDGGRERVEGSCSDSWASSAFISELDQIKNEKGGNRSLQGTTSSTEIDLMDDFLEMERLVALPTETQAKNSKDGYELSLMEKLEKIQAEKDDLEREVKCCREAEKRLSLEIEAVVGDKMELEDMLKRVEAEKAELKTSFDVLKDKYQESRVCFQEVDTKLEKLQAEKDELDSEVICCKEAEKRFSLELEAVVGDKIEMEDELEKMEAEKAELKISFDVIKDQYQESRVCFQEVEMKLEAMKRELKLANESKTQAESRVTRMEAEVRKERIVSDGLKEKCETFEEELRREIEEKTMIKREKVEPKIKQEDIATAAGKFADCQKTIASLGKQLQSLATLEEFLIDTASIPGSARSVHNKEALLGKDPHECIKTINGRSLEFLAIQNSNNKTSPPCSSSSDSTTVSLIMSSNRGSSEKNRNGFATVFTRSRNSVNLGI.

Coiled-coil stretches lie at residues W34–R61 and N102–E171. Positions S186–S205 are disordered. Over residues S193–E203 the composition is skewed to basic and acidic residues. Positions E270–E493 form a coiled coil.

This sequence belongs to the FPP family. As to quaternary structure, interacts with WPP/MAF proteins. Binds to COG2; this interaction promotes the association between cortical microtubules and EXO70A1. In terms of tissue distribution, accumulates in preferentially xylem cells.

Its subcellular location is the vesicle. Functionally, ensures, when in complex with FPP3/VETH1 and COG2, the correct secondary cell wall (SCW) deposition pattern by recruiting exocyst components to cortical microtubules in xylem cells during secondary cell wall deposition by recruiting EXO70A1. In Arabidopsis thaliana (Mouse-ear cress), this protein is Filament-like plant protein 2.